Reading from the N-terminus, the 213-residue chain is Adenylate kinase (213 aa).

Residue 10-15 (GAGKGT) participates in ATP binding. An NMP region spans residues 30-59 (STGDMLRAAVAAGSEVGLRAKAAMESGSLV). Residues Thr31, Arg36, 57 to 59 (SLV), 85 to 88 (GFPR), and Gln92 contribute to the AMP site. The segment at 126–163 (GRSSCEKCGEGYHDSFKPSAQPNVCDKCSGTLKRRADD) is LID. An ATP-binding site is contributed by Arg127. Zn(2+) contacts are provided by Cys130, Cys133, Cys150, and Cys153. Positions 160 and 171 each coordinate AMP. Gln199 contributes to the ATP binding site.

Belongs to the adenylate kinase family. Monomer.

It is found in the cytoplasm. It catalyses the reaction AMP + ATP = 2 ADP. The protein operates within purine metabolism; AMP biosynthesis via salvage pathway; AMP from ADP: step 1/1. Its function is as follows. Catalyzes the reversible transfer of the terminal phosphate group between ATP and AMP. Plays an important role in cellular energy homeostasis and in adenine nucleotide metabolism. The protein is Adenylate kinase of Magnetococcus marinus (strain ATCC BAA-1437 / JCM 17883 / MC-1).